A 288-amino-acid chain; its full sequence is Rhythmically expressed gene 5 protein (288 aa).

As to expression, expressed in head, but not in the body. Expression levels oscillate with the circadian rhythm.

In terms of biological role, involved in the generation of biological rhythms (Potential). In the head, oscillates in abundance with a daily peak during early night, even under constant darkness. Oscillation is dependent on period (per) function. The polypeptide is Rhythmically expressed gene 5 protein (Reg-5) (Drosophila melanogaster (Fruit fly)).